A 1238-amino-acid chain; its full sequence is Anion exchange protein 2 (1238 aa).

Positions 1–238 (MSGTPRRPAS…YNLQERRRIG (238 aa)) are disordered. Residues 1–704 (MSGTPRRPAS…SDFRDALDPQ (704 aa)) lie on the Cytoplasmic side of the membrane. Composition is skewed to basic and acidic residues over residues 37-49 (DLHR…RFEE) and 58-75 (GGEE…EYHR). Composition is skewed to basic residues over residues 76 to 85 (QSSHHIHHPL) and 94 to 110 (RRRK…RRRP). Residues 120–133 (TIEEGEEDEDETSE) are compositionally biased toward acidic residues. A phosphoserine mark is found at serine 132, serine 144, serine 170, and serine 172. Polar residues predominate over residues 141–154 (TDPSPASTPTSVQF). The segment covering 205–215 (GTAGGDDGGAS) has biased composition (gly residues). At serine 239 the chain carries Phosphoserine. Threonine 253 carries the post-translational modification Phosphothreonine. The residue at position 270 (lysine 270) is an N6-methyllysine. The interval 277–315 (VPGVRRHLVRKNAKGSSQSSREGREPGPTPRTRPRAPHK) is disordered. Residues 280–289 (VRRHLVRKNA) show a composition bias toward basic residues. The residue at position 439 (serine 439) is a Phosphoserine. Positions 445 to 466 (SLLGHHHTQGAESDPHVTEPLI) are disordered. The next 4 helical transmembrane spans lie at 705–728 (CLAA…GLLG), 734–771 (LIGV…LLVF), 791–813 (VWIG…SFLV), and 823–844 (IFAF…VKIF). The segment at 705 to 1238 (CLAAVIFIYF…DEYNEMPMPV (534 aa)) is membrane (anion exchange). The Extracellular portion of the chain corresponds to 845–897 (QEHPLHGCLASNSSEADGGKNTTWTEAAPTPGHGNTSSAEQAGVERPQGQPNT). 3 N-linked (GlcNAc...) asparagine glycosylation sites follow: asparagine 856, asparagine 865, and asparagine 879. Positions 858–869 (SEADGGKNTTWT) are enriched in polar residues. The segment at 858–892 (SEADGGKNTTWTEAAPTPGHGNTSSAEQAGVERPQ) is disordered. The helical transmembrane segment at 898-915 (ALLSLVLMAGTFFIAFFL) threads the bilayer. The Cytoplasmic portion of the chain corresponds to 916–930 (RKFKNSRFFPGRIRR). The next 5 membrane-spanning stretches (helical) occupy residues 931-951 (VIGD…DYSI), 985-1007 (PFPV…LIFM), 1033-1054 (LLLI…LAAA), 1088-1133 (VTGL…IQFY), and 1160-1196 (MHLF…TVPL). Cysteine 1170 carries the S-palmitoyl cysteine lipid modification.

Belongs to the anion exchanger (TC 2.A.31) family. As to expression, expressed in the cochlea (at protein level).

It localises to the apical cell membrane. It is found in the basolateral cell membrane. It catalyses the reaction hydrogencarbonate(in) + chloride(out) = hydrogencarbonate(out) + chloride(in). Functionally, sodium-independent anion exchanger which mediates the electroneutral exchange of chloride for bicarbonate ions across the cell membrane. Plays an important role in osteoclast differentiation and function. Regulates bone resorption and calpain-dependent actin cytoskeleton organization in osteoclasts via anion exchange-dependent control of pH. Essential for intracellular pH regulation in CD8(+) T-cells upon CD3 stimulation, modulating CD8(+) T-cell response. The protein is Anion exchange protein 2 (SLC4A2) of Cavia porcellus (Guinea pig).